The sequence spans 426 residues: Probable glucose-6-phosphate isomerase (426 aa).

E272 serves as the catalytic Proton donor. Catalysis depends on residues H293 and K404.

Belongs to the GPI family.

The protein resides in the cytoplasm. The enzyme catalyses alpha-D-glucose 6-phosphate = beta-D-fructose 6-phosphate. It participates in carbohydrate biosynthesis; gluconeogenesis. The protein operates within carbohydrate degradation; glycolysis; D-glyceraldehyde 3-phosphate and glycerone phosphate from D-glucose: step 2/4. In terms of biological role, catalyzes the reversible isomerization of glucose-6-phosphate to fructose-6-phosphate. The protein is Probable glucose-6-phosphate isomerase of Halobacterium salinarum (strain ATCC 700922 / JCM 11081 / NRC-1) (Halobacterium halobium).